The primary structure comprises 162 residues: Beta-lactoglobulin-1 (162 aa).

Disulfide bonds link Cys-66–Cys-160 and Cys-106–Cys-119.

It belongs to the calycin superfamily. Lipocalin family. In terms of assembly, monomer. In terms of tissue distribution, synthesized in mammary gland and secreted in milk.

Its subcellular location is the secreted. Primary component of whey, it binds retinol and is probably involved in the transport of that molecule. The polypeptide is Beta-lactoglobulin-1 (LGB1) (Equus asinus (Donkey)).